We begin with the raw amino-acid sequence, 644 residues long: MAKIIGIDLGTTNSCVAVMEGDKPKVIENSEGHRTTPSIVAFTDDNEILVGQSAKRQSVTNPEKTLFAIKRLIGRRFDDPIVQKDIKMVPYKIMKADNGDAWVRVKDQDKAPPQISAEVLRKMKKTAEDYLGEEVKEAVITVPAYFNDSQRQATKDAGRIAGLEVKRIINEPTAAALAYGMDKKRGDSVIAVYDLGGGTFDISIIEIAEVDGEHQFEVLATNGDTFLGGEDFDLALIEYLASEFKKDTGIDLHNDPLALQRLKEAAEKAKIELSSAQQTDVNLPYITADASGPKHLNIKLTRAKLESLVEKLVERTIEPCKTALKDAGLTVSQINEVILVGGQTRMPLVQKTVEEFFGKEPRKDVNPDEAVAVGAAIQAAVLSGEVKDILLLDVTPLSLGIETMGGVMTKLIEKNTTIPTKATQVFSTADDNQTAVTVHVLQGEREQASANKSLGRFDLRDIPPAPRGVPQIEVTFDIDANGILNVSAKDKATGKAQSIVIKASSGLSEEEVAAMVKDAQSHAEEDKKFKEMAELRNQADSLIHSCEKSMKDLADELSEDEKKGIETAISELKEAVQGTDKARIEDKLKVLTDASAKMAERIYAKKSSEGQAAQGQTQSQESTKPAEEGVVDAEFEEVKEEDKK.

Thr-199 carries the post-translational modification Phosphothreonine; by autocatalysis. A disordered region spans residues 603 to 644 (YAKKSSEGQAAQGQTQSQESTKPAEEGVVDAEFEEVKEEDKK). Over residues 609 to 623 (EGQAAQGQTQSQEST) the composition is skewed to polar residues. Residues 629-644 (GVVDAEFEEVKEEDKK) show a composition bias toward acidic residues.

This sequence belongs to the heat shock protein 70 family.

In terms of biological role, acts as a chaperone. The chain is Chaperone protein DnaK from Legionella pneumophila (strain Corby).